Consider the following 426-residue polypeptide: Enolase 1 (426 aa).

Gln162 is a binding site for (2R)-2-phosphoglycerate. Catalysis depends on Glu204, which acts as the Proton donor. Positions 241, 284, and 311 each coordinate Mg(2+). (2R)-2-phosphoglycerate is bound by residues Lys336, Arg365, Ser366, and Lys387. The active-site Proton acceptor is Lys336.

Belongs to the enolase family. Requires Mg(2+) as cofactor.

The protein resides in the cytoplasm. Its subcellular location is the secreted. It is found in the cell surface. The enzyme catalyses (2R)-2-phosphoglycerate = phosphoenolpyruvate + H2O. The protein operates within carbohydrate degradation; glycolysis; pyruvate from D-glyceraldehyde 3-phosphate: step 4/5. Catalyzes the reversible conversion of 2-phosphoglycerate (2-PG) into phosphoenolpyruvate (PEP). It is essential for the degradation of carbohydrates via glycolysis. In Methanospirillum hungatei JF-1 (strain ATCC 27890 / DSM 864 / NBRC 100397 / JF-1), this protein is Enolase 1.